The primary structure comprises 397 residues: UPF0597 protein Tmel_1007 (397 aa).

Belongs to the UPF0597 family.

The sequence is that of UPF0597 protein Tmel_1007 from Thermosipho melanesiensis (strain DSM 12029 / CIP 104789 / BI429).